Consider the following 750-residue polypeptide: Coiled-coil domain-containing protein 142 (750 aa).

The segment at 1 to 29 is disordered; the sequence is MAQASRSGSLPPLVIVPPLRAQPGGTGEE. Residues 87 to 110 adopt a coiled-coil conformation; sequence ALQRLRAVLLRLHREREQLLQARD. Residues 687 to 714 are disordered; the sequence is LEPPLQPGTSPAQTGQLQSTLGGRGPSP. A compositionally biased stretch (polar residues) spans 693–707; sequence PGTSPAQTGQLQSTL.

The chain is Coiled-coil domain-containing protein 142 (CCDC142) from Homo sapiens (Human).